Consider the following 667-residue polypeptide: Mannosyl-oligosaccharide alpha-1,2-mannosidase IA (667 aa).

Residues 1-18 are Cytoplasmic-facing; it reads MYRISPIGRKSNFHSREK. Residues 19–39 traverse the membrane as a helical; Signal-anchor for type II membrane protein segment; that stretch reads CLIGLVLVTLCFLCFGGIFLL. Residues 40-667 are Lumenal-facing; it reads PDNFGSDRVL…PVTLPVSNAS (628 aa). The interval 154–192 is disordered; sequence GDNAASQASSHPQSSAQQHNQQQPQLPLGGGGNDQAPDT. Over residues 156-178 the composition is skewed to low complexity; sequence NAASQASSHPQSSAQQHNQQQPQ. An N-linked (GlcNAc...) asparagine glycan is attached at Asn-278. An intrachain disulfide couples Cys-483 to Cys-515. Glu-529 functions as the Proton donor in the catalytic mechanism. A Ca(2+)-binding site is contributed by Thr-640.

This sequence belongs to the glycosyl hydrolase 47 family. Ca(2+) is required as a cofactor. Requires Mg(2+) as cofactor. In terms of tissue distribution, complex spatial distribution during embryogenesis, including expression in lobula plate giant neurons. Also expressed in adult wing and eyes.

The protein resides in the golgi apparatus membrane. The catalysed reaction is N(4)-(alpha-D-Man-(1-&gt;2)-alpha-D-Man-(1-&gt;2)-alpha-D-Man-(1-&gt;3)-[alpha-D-Man-(1-&gt;2)-alpha-D-Man-(1-&gt;3)-[alpha-D-Man-(1-&gt;2)-alpha-D-Man-(1-&gt;6)]-alpha-D-Man-(1-&gt;6)]-beta-D-Man-(1-&gt;4)-beta-D-GlcNAc-(1-&gt;4)-beta-D-GlcNAc)-L-asparaginyl-[protein] (N-glucan mannose isomer 9A1,2,3B1,2,3) + 4 H2O = N(4)-(alpha-D-Man-(1-&gt;3)-[alpha-D-Man-(1-&gt;3)-[alpha-D-Man-(1-&gt;6)]-alpha-D-Man-(1-&gt;6)]-beta-D-Man-(1-&gt;4)-beta-D-GlcNAc-(1-&gt;4)-beta-D-GlcNAc)-L-asparaginyl-[protein] (N-glucan mannose isomer 5A1,2) + 4 beta-D-mannose. It carries out the reaction N(4)-(alpha-D-Man-(1-&gt;2)-alpha-D-Man-(1-&gt;2)-alpha-D-Man-(1-&gt;3)-[alpha-D-Man-(1-&gt;3)-[alpha-D-Man-(1-&gt;2)-alpha-D-Man-(1-&gt;6)]-alpha-D-Man-(1-&gt;6)]-beta-D-Man-(1-&gt;4)-beta-D-GlcNAc-(1-&gt;4)-beta-D-GlcNAc)-L-asparaginyl-[protein] (N-glucan mannose isomer 8A1,2,3B1,3) + 3 H2O = N(4)-(alpha-D-Man-(1-&gt;3)-[alpha-D-Man-(1-&gt;3)-[alpha-D-Man-(1-&gt;6)]-alpha-D-Man-(1-&gt;6)]-beta-D-Man-(1-&gt;4)-beta-D-GlcNAc-(1-&gt;4)-beta-D-GlcNAc)-L-asparaginyl-[protein] (N-glucan mannose isomer 5A1,2) + 3 beta-D-mannose. The protein operates within protein modification; protein glycosylation. Involved in the maturation of Asn-linked oligosaccharides. Progressively trim alpha-1,2-linked mannose residues from Man(9)GlcNAc(2) to produce Man(5)GlcNAc(2). In Drosophila melanogaster (Fruit fly), this protein is Mannosyl-oligosaccharide alpha-1,2-mannosidase IA.